The chain runs to 662 residues: Chaperone protein HtpG (662 aa).

The a; substrate-binding stretch occupies residues M1–R352. The tract at residues E353–R594 is b. A disordered region spans residues H382–V402. A c region spans residues L595 to V662.

The protein belongs to the heat shock protein 90 family. In terms of assembly, homodimer.

Its subcellular location is the cytoplasm. Functionally, molecular chaperone. Has ATPase activity. This is Chaperone protein HtpG from Verminephrobacter eiseniae (strain EF01-2).